Here is a 219-residue protein sequence, read N- to C-terminus: MSESAFKDCFLTDVSADTRLFHFLARDYIVQEGQQPSWLFYLTRGRARLYATLANGRVSLIDFFAAPCFIGEIELIDKDHEPRAVQAIEECWCLALPMKHYRPLLLNDTLFLRKLCVTLSHKNYRNIVSLTQNQSFPLVNRLAAFILLSQEGDLYHEKHTQAAEYLGVSYRHLLYVLAQFIHDGLLIKSKKGYLIKNRKQLSGLALEMDPENKFSGMMQ.

The sensory domain stretch occupies residues 19–97 (RLFHFLARDY…IEECWCLALP (79 aa)). [4Fe-4S] cluster-binding residues include C68, C91, C93, and C116. The dimer interface stretch occupies residues 111 to 131 (FLRKLCVTLSHKNYRNIVSLT). Positions 136 to 199 (FPLVNRLAAF…KKGYLIKNRK (64 aa)) constitute an HTH crp-type domain. Residues 158 to 181 (KHTQAAEYLGVSYRHLLYVLAQFI) constitute a DNA-binding region (H-T-H motif).

Homodimer. [4Fe-4S] cluster serves as cofactor.

It localises to the cytoplasm. In terms of biological role, transcription regulator involved in mid-term, stationary-phase viability under nitrogen starvation. Might control expression of the salvage pathways or in some other way repress the recycling of nucleobases to nucleic acids and enhance their use as general nitrogen sources during nitrogen-limited growth. This Escherichia coli O157:H7 protein is Regulatory protein YeiL (yeiL).